The chain runs to 249 residues: Uridylate kinase (249 aa).

22–25 (KISG) lines the ATP pocket. Residues 30–35 (GTQGFG) are involved in allosteric activation by GTP. Glycine 64 serves as a coordination point for UMP. Glycine 65 and arginine 69 together coordinate ATP. UMP is bound by residues aspartate 84 and 145-152 (TGNPYFTT). ATP is bound by residues asparagine 173, tyrosine 179, and aspartate 182.

Belongs to the UMP kinase family. Homohexamer.

It localises to the cytoplasm. It carries out the reaction UMP + ATP = UDP + ADP. Its pathway is pyrimidine metabolism; CTP biosynthesis via de novo pathway; UDP from UMP (UMPK route): step 1/1. Allosterically activated by GTP. Inhibited by UTP. Its function is as follows. Catalyzes the reversible phosphorylation of UMP to UDP. In Ruegeria sp. (strain TM1040) (Silicibacter sp.), this protein is Uridylate kinase.